A 649-amino-acid polypeptide reads, in one-letter code: Endoplasmic reticulum membrane protein 65 (649 aa).

A disordered region spans residues 1-55; the sequence is MGSNTSPGQADPLESENESSLTSRFLPNKRDGGKDNESVIPEKEEPDLNEPVLAV. Residues 1–165 lie on the Cytoplasmic side of the membrane; the sequence is MGSNTSPGQA…LATPYAIEKT (165 aa). Residues 28 to 43 show a composition bias toward basic and acidic residues; it reads NKRDGGKDNESVIPEK. The residue at position 94 (Ser94) is a Phosphoserine. The chain crosses the membrane as a helical span at residues 166–186; that stretch reads FLFGWFVSVDSFLYIFTLFPI. Residues 187–302 are Lumenal-facing; it reads RVLISFFTLS…NFWNPAGWMT (116 aa). Residue Asn215 is glycosylated (N-linked (GlcNAc...) asparagine). Residues 303 to 323 form a helical membrane-spanning segment; sequence FFYYFAISLAYMVLHTLVLLY. Over 324–366 the chain is Cytoplasmic; that stretch reads QIITLNVTVNSYSNAVLALLMSNQLVEIKGAVFKKFEKENLFQ. The helical transmembrane segment at 367 to 387 threads the bilayer; sequence LTCSDVVERFQITIMVIIIFL. At 388-414 the chain is on the lumenal side; it reads RNLAELYTTSSLDQPLLTFKRLKTLLA. A helical membrane pass occupies residues 415 to 435; sequence PFFWVIGSELFVDWLKHAFII. Over 436–479 the chain is Cytoplasmic; the sequence is KFNYIKPSIYSRFTDVLCHDYVASGAQLTQTVTGCSQQVARRMG. A helical transmembrane segment spans residues 480-500; that stretch reads LPVLPLVCVFIRTSMQTWSMF. Residues 501 to 557 are Lumenal-facing; sequence RSTHSMKQEIAKSIGTIFPTKDNYVYYLPNKEANTYNAGKEASWETLLLSVVRGKSG. Residues 558-578 traverse the membrane as a helical segment; sequence IAFLFFMAIMLKLLLGKAILA. At 579–649 the chain is on the cytoplasmic side; it reads ITQSRYESMQ…RYAMHSKRIW (71 aa).

Belongs to the TAPT1 family. In terms of assembly, interacts with slp1.

It localises to the endoplasmic reticulum membrane. Its function is as follows. May be involved in membrane protein folding. The polypeptide is Endoplasmic reticulum membrane protein 65 (Schizosaccharomyces pombe (strain 972 / ATCC 24843) (Fission yeast)).